Reading from the N-terminus, the 240-residue chain is 2,3,4,5-tetrahydropyridine-2,6-dicarboxylate N-acetyltransferase (240 aa).

It belongs to the transferase hexapeptide repeat family. DapH subfamily.

It carries out the reaction (S)-2,3,4,5-tetrahydrodipicolinate + acetyl-CoA + H2O = L-2-acetamido-6-oxoheptanedioate + CoA. Its pathway is amino-acid biosynthesis; L-lysine biosynthesis via DAP pathway; LL-2,6-diaminopimelate from (S)-tetrahydrodipicolinate (acetylase route): step 1/3. Functionally, catalyzes the transfer of an acetyl group from acetyl-CoA to tetrahydrodipicolinate. This is 2,3,4,5-tetrahydropyridine-2,6-dicarboxylate N-acetyltransferase from Bacillus cytotoxicus (strain DSM 22905 / CIP 110041 / 391-98 / NVH 391-98).